Consider the following 346-residue polypeptide: Parapinopsin (346 aa).

Over 1–29 (MASIILINFSETDTLHLGSVNDHIMPRIG) the chain is Extracellular. The N-linked (GlcNAc...) asparagine glycan is linked to Asn-8. A helical transmembrane segment spans residues 30–54 (YTILSIIMALSSTFGIILNMVVIIV). The Cytoplasmic portion of the chain corresponds to 55-66 (TVRYKQLRQPLN). The chain crosses the membrane as a helical span at residues 67–91 (YALVNLAVADLGCPVFGGLLTAVTN). Over 92-106 (AMGYFSLGRVGCVLE) the chain is Extracellular. Cys-103 and Cys-180 are joined by a disulfide. A helical membrane pass occupies residues 107–126 (GFAVAFFGIAGLCSVAVIAV). At 127 to 145 (DRYMVVCRPLGAVMFQTKH) the chain is on the cytoplasmic side. A helical membrane pass occupies residues 146–169 (ALAGVVFSWVWSFIWNTPPLFGWG). The Extracellular portion of the chain corresponds to 170 to 193 (SYQLEGVMTSCAPNWYRRDPVNVS). A glycan (N-linked (GlcNAc...) asparagine) is linked at Asn-191. A helical membrane pass occupies residues 194-221 (YILCYFMLCFALPFATIIFSYMHLLHTL). At 222–244 (WQVAKLQVADSGSTAKVEVQVAR) the chain is on the cytoplasmic side. Residues 245 to 268 (MVVIMVMAFLLTWLPYAAFALTVI) form a helical membrane-spanning segment. The Extracellular segment spans residues 269–276 (IDSNIYIN). The helical transmembrane segment at 277 to 301 (PVIGTIPAYLAKSSTVFNPIIYIFM) threads the bilayer. Lys-288 carries the post-translational modification N6-(retinylidene)lysine. At 302-346 (NRQFRDYALPCLLCGKNPWAAKEGRDSDTNTLTTTVSKNTSVSPL) the chain is on the cytoplasmic side. A lipid anchor (S-palmitoyl cysteine) is attached at Cys-315. Positions 325 to 346 (GRDSDTNTLTTTVSKNTSVSPL) are disordered. Positions 330–346 (TNTLTTTVSKNTSVSPL) are enriched in low complexity.

This sequence belongs to the G-protein coupled receptor 1 family. Opsin subfamily. Phosphorylated on some or all of the serine and threonine residues present in the C-terminal region. As to expression, parapineal organ.

It localises to the membrane. The sequence is that of Parapinopsin from Ictalurus punctatus (Channel catfish).